We begin with the raw amino-acid sequence, 106 residues long: UPF0060 membrane protein R01043 (106 aa).

Helical transmembrane passes span Ala-5–Leu-25, Ala-31–Val-51, Ala-61–Val-81, and His-85–Pro-105.

The protein belongs to the UPF0060 family.

The protein localises to the cell inner membrane. This is UPF0060 membrane protein R01043 from Rhizobium meliloti (strain 1021) (Ensifer meliloti).